Reading from the N-terminus, the 982-residue chain is Mitochondrial DNA mismatch repair protein mutS homolog (982 aa).

698-705 (SVNGAGKS) contributes to the ATP binding site. An HNH domain is found at 905–951 (CEICGAPADAVHHIKPKSEHKKLCNRKLNRRSNLVPVCSSCHLDIHR).

This sequence belongs to the DNA mismatch repair MutS family.

Its subcellular location is the mitochondrion. Functionally, may be involved in DNA-mismatch repair. The polypeptide is Mitochondrial DNA mismatch repair protein mutS homolog (Sarcophyton glaucum (Toadstool umbrella leather coral)).